Consider the following 293-residue polypeptide: GDT1-like protein 3 (293 aa).

The N-terminal stretch at 1 to 25 (MGLISNPTRLILVATIFFLVSSISG) is a signal peptide. The next 6 helical transmembrane spans lie at 89–109 (FSMI…ALMA), 115–135 (ATVL…STGL), 148–168 (TNSA…YIAW), 200–220 (LFSR…FLAE), 238–258 (AIGV…LAVV), and 272–292 (VATV…FYPP).

It belongs to the GDT1 family.

It localises to the membrane. In Arabidopsis thaliana (Mouse-ear cress), this protein is GDT1-like protein 3.